The following is a 412-amino-acid chain: L-cysteine:1D-myo-inositol 2-amino-2-deoxy-alpha-D-glucopyranoside ligase (412 aa).

Cysteine 45 serves as a coordination point for Zn(2+). Residues 45–48 (CGIT), threonine 60, and 83–85 (NIT) contribute to the L-cysteinyl-5'-AMP site. A 'HIGH' region motif is present at residues 47–57 (ITPYDAAHLGH). Positions 185–190 (ERGGDP) match the 'ERGGDP' region motif. L-cysteinyl-5'-AMP is bound at residue tryptophan 225. Cysteine 229 is a Zn(2+) binding site. 247 to 249 (GDD) serves as a coordination point for L-cysteinyl-5'-AMP. Histidine 254 contributes to the Zn(2+) binding site. Position 281 (valine 281) interacts with L-cysteinyl-5'-AMP. Residues 287–291 (KMSKS) carry the 'KMSKS' region motif.

This sequence belongs to the class-I aminoacyl-tRNA synthetase family. MshC subfamily. As to quaternary structure, monomer. The cofactor is Zn(2+).

The catalysed reaction is 1D-myo-inositol 2-amino-2-deoxy-alpha-D-glucopyranoside + L-cysteine + ATP = 1D-myo-inositol 2-(L-cysteinylamino)-2-deoxy-alpha-D-glucopyranoside + AMP + diphosphate + H(+). Functionally, catalyzes the ATP-dependent condensation of GlcN-Ins and L-cysteine to form L-Cys-GlcN-Ins. The sequence is that of L-cysteine:1D-myo-inositol 2-amino-2-deoxy-alpha-D-glucopyranoside ligase from Thermobifida fusca (strain YX).